The chain runs to 436 residues: Glutamyl-tRNA reductase (436 aa).

Residues 49–52 (TCNR), serine 109, 114–116 (EGQ), and glutamine 120 each bind substrate. The active-site Nucleophile is cysteine 50. Residue 198 to 203 (GAGRMS) coordinates NADP(+).

Belongs to the glutamyl-tRNA reductase family. Homodimer.

The catalysed reaction is (S)-4-amino-5-oxopentanoate + tRNA(Glu) + NADP(+) = L-glutamyl-tRNA(Glu) + NADPH + H(+). It functions in the pathway porphyrin-containing compound metabolism; protoporphyrin-IX biosynthesis; 5-aminolevulinate from L-glutamyl-tRNA(Glu): step 1/2. It participates in porphyrin-containing compound metabolism; chlorophyll biosynthesis. In terms of biological role, catalyzes the NADPH-dependent reduction of glutamyl-tRNA(Glu) to glutamate 1-semialdehyde (GSA). This is Glutamyl-tRNA reductase from Prochlorococcus marinus (strain MIT 9313).